Here is a 631-residue protein sequence, read N- to C-terminus: Phosphomethylpyrimidine synthase (631 aa).

Substrate is bound by residues N239, M268, Y297, H333, 353 to 355 (SRG), 394 to 397 (DGLR), and E433. H437 contacts Zn(2+). Y460 contributes to the substrate binding site. H501 is a Zn(2+) binding site. Residues C581, C584, and C589 each contribute to the [4Fe-4S] cluster site.

This sequence belongs to the ThiC family. In terms of assembly, homodimer. Requires [4Fe-4S] cluster as cofactor.

It carries out the reaction 5-amino-1-(5-phospho-beta-D-ribosyl)imidazole + S-adenosyl-L-methionine = 4-amino-2-methyl-5-(phosphooxymethyl)pyrimidine + CO + 5'-deoxyadenosine + formate + L-methionine + 3 H(+). It functions in the pathway cofactor biosynthesis; thiamine diphosphate biosynthesis. Functionally, catalyzes the synthesis of the hydroxymethylpyrimidine phosphate (HMP-P) moiety of thiamine from aminoimidazole ribotide (AIR) in a radical S-adenosyl-L-methionine (SAM)-dependent reaction. This is Phosphomethylpyrimidine synthase from Salmonella agona (strain SL483).